Here is a 905-residue protein sequence, read N- to C-terminus: Coatomer subunit beta' (905 aa).

WD repeat units lie at residues Ala13–Thr52, Val55–Met94, Ala97–Gln136, Gly140–Thr180, Gly183–Thr224, Gly227–Thr266, Ser350–Phe388, and Ser390–Lys425. Lys627 is modified (N6-acetyllysine). Residues Ile746–Lys783 form a WD 9 repeat. The tract at residues Glu837 to Asp905 is disordered. Ser859 is modified (phosphoserine). A coiled-coil region spans residues Gln867–Ile891. The segment covering Glu878–Asp905 has biased composition (acidic residues).

This sequence belongs to the WD repeat COPB2 family. As to quaternary structure, oligomeric complex that consists of at least the alpha, beta, beta', gamma, delta, epsilon and zeta subunits. Probably interacts with PEX11A. Interacts with JAGN1. Interacts with SCYL1.

It localises to the cytoplasm. The protein resides in the cytosol. It is found in the golgi apparatus membrane. Its subcellular location is the cytoplasmic vesicle. The protein localises to the COPI-coated vesicle membrane. The coatomer is a cytosolic protein complex that binds to dilysine motifs and reversibly associates with Golgi non-clathrin-coated vesicles, which further mediate biosynthetic protein transport from the ER, via the Golgi up to the trans Golgi network. Coatomer complex is required for budding from Golgi membranes, and is essential for the retrograde Golgi-to-ER transport of dilysine-tagged proteins. In mammals, the coatomer can only be recruited by membranes associated to ADP-ribosylation factors (ARFs), which are small GTP-binding proteins; the complex also influences the Golgi structural integrity, as well as the processing, activity, and endocytic recycling of LDL receptors. Its function is as follows. This coatomer complex protein, essential for Golgi budding and vesicular trafficking, is a selective binding protein (RACK) for protein kinase C, epsilon type. It binds to Golgi membranes in a GTP-dependent manner. The polypeptide is Coatomer subunit beta' (Copb2) (Rattus norvegicus (Rat)).